Consider the following 232-residue polypeptide: 5'-methylthioadenosine/S-adenosylhomocysteine nucleosidase (232 aa).

Catalysis depends on E12, which acts as the Proton acceptor. Substrate contacts are provided by residues G78, I152, and 173–174 (ME). D197 functions as the Proton donor in the catalytic mechanism.

This sequence belongs to the PNP/UDP phosphorylase family. MtnN subfamily. Homodimer.

The catalysed reaction is S-adenosyl-L-homocysteine + H2O = S-(5-deoxy-D-ribos-5-yl)-L-homocysteine + adenine. It catalyses the reaction S-methyl-5'-thioadenosine + H2O = 5-(methylsulfanyl)-D-ribose + adenine. The enzyme catalyses 5'-deoxyadenosine + H2O = 5-deoxy-D-ribose + adenine. It functions in the pathway amino-acid biosynthesis; L-methionine biosynthesis via salvage pathway; S-methyl-5-thio-alpha-D-ribose 1-phosphate from S-methyl-5'-thioadenosine (hydrolase route): step 1/2. Catalyzes the irreversible cleavage of the glycosidic bond in both 5'-methylthioadenosine (MTA) and S-adenosylhomocysteine (SAH/AdoHcy) to adenine and the corresponding thioribose, 5'-methylthioribose and S-ribosylhomocysteine, respectively. Also cleaves 5'-deoxyadenosine, a toxic by-product of radical S-adenosylmethionine (SAM) enzymes, into 5-deoxyribose and adenine. Thus, is required for in vivo function of the radical SAM enzymes biotin synthase and lipoic acid synthase, that are inhibited by 5'-deoxyadenosine accumulation. This is 5'-methylthioadenosine/S-adenosylhomocysteine nucleosidase from Shigella boydii serotype 4 (strain Sb227).